A 940-amino-acid polypeptide reads, in one-letter code: Valine--tRNA ligase (940 aa).

A 'HIGH' region motif is present at residues 47–57 (PNVTGVLHMGH). The 'KMSKS' region motif lies at 564-568 (KLSKS). Lysine 567 is an ATP binding site. Positions 873-905 (EEHLLKEKGRLEKERVRLERAVENLERLLGDES) form a coiled coil.

Belongs to the class-I aminoacyl-tRNA synthetase family. ValS type 1 subfamily. Monomer.

It is found in the cytoplasm. The enzyme catalyses tRNA(Val) + L-valine + ATP = L-valyl-tRNA(Val) + AMP + diphosphate. In terms of biological role, catalyzes the attachment of valine to tRNA(Val). As ValRS can inadvertently accommodate and process structurally similar amino acids such as threonine, to avoid such errors, it has a 'posttransfer' editing activity that hydrolyzes mischarged Thr-tRNA(Val) in a tRNA-dependent manner. This is Valine--tRNA ligase from Chlamydia pneumoniae (Chlamydophila pneumoniae).